A 134-amino-acid chain; its full sequence is Transmembrane protein 100 (134 aa).

The tract at residues methionine 1 to serine 24 is disordered. The residue at position 15 (serine 15) is a Phosphoserine. A run of 2 helical transmembrane segments spans residues cysteine 56–tyrosine 76 and valine 84–alanine 104. Serine 121 bears the Phosphoserine mark.

As to quaternary structure, interacts (via C-terminus) with TRPA1 and TRPV1. Interacts with TASOR.

It is found in the cell membrane. The protein localises to the membrane. The protein resides in the perikaryon. It localises to the cytoplasm. Its subcellular location is the perinuclear region. It is found in the endoplasmic reticulum. In terms of biological role, plays a role during embryonic arterial endothelium differentiation and vascular morphogenesis through the ACVRL1 receptor-dependent signaling pathway upon stimulation by bone morphogenetic proteins, such as GDF2/BMP9 and BMP10. Involved in the regulation of nociception, acting as a modulator of the interaction between TRPA1 and TRPV1, two molecular sensors and mediators of pain signals in dorsal root ganglia (DRG) neurons. Mechanistically, it weakens their interaction, thereby releasing the inhibition of TRPA1 by TRPV1 and increasing the single-channel open probability of the TRPA1-TRPV1 complex. The sequence is that of Transmembrane protein 100 (Tmem100) from Rattus norvegicus (Rat).